Consider the following 274-residue polypeptide: 2,3,4,5-tetrahydropyridine-2,6-dicarboxylate N-succinyltransferase (274 aa).

Residues Arg-104 and Asp-141 each coordinate substrate.

Belongs to the transferase hexapeptide repeat family. Homotrimer.

The protein localises to the cytoplasm. The catalysed reaction is (S)-2,3,4,5-tetrahydrodipicolinate + succinyl-CoA + H2O = (S)-2-succinylamino-6-oxoheptanedioate + CoA. It participates in amino-acid biosynthesis; L-lysine biosynthesis via DAP pathway; LL-2,6-diaminopimelate from (S)-tetrahydrodipicolinate (succinylase route): step 1/3. The protein is 2,3,4,5-tetrahydropyridine-2,6-dicarboxylate N-succinyltransferase of Shewanella pealeana (strain ATCC 700345 / ANG-SQ1).